The primary structure comprises 91 residues: Acylphosphatase (91 aa).

Positions 3-90 constitute an Acylphosphatase-like domain; it reads RVLIRVKGKV…EIYLDFSITQ (88 aa). Active-site residues include arginine 18 and asparagine 36.

It belongs to the acylphosphatase family.

The catalysed reaction is an acyl phosphate + H2O = a carboxylate + phosphate + H(+). The protein is Acylphosphatase (acyP) of Shewanella amazonensis (strain ATCC BAA-1098 / SB2B).